Here is a 61-residue protein sequence, read N- to C-terminus: Putative protein RenD (61 aa).

This Escherichia coli (strain K12) protein is Putative protein RenD (renD).